Consider the following 82-residue polypeptide: Omega-conotoxin-like TxMKLT1-031 (82 aa).

The N-terminal stretch at methionine 1 to alanine 22 is a signal peptide. Residues aspartate 23–glutamate 49 constitute a propeptide that is removed on maturation. 3 disulfides stabilise this stretch: cysteine 53-cysteine 71, cysteine 60-cysteine 76, and cysteine 70-cysteine 81.

Belongs to the conotoxin O1 superfamily. As to expression, expressed by the venom duct.

The protein resides in the secreted. In terms of biological role, omega-conotoxins act at presynaptic membranes, they bind and block voltage-gated calcium channels (Cav). This Conus textile (Cloth-of-gold cone) protein is Omega-conotoxin-like TxMKLT1-031.